A 221-amino-acid chain; its full sequence is Catechol O-methyltransferase (221 aa).

S-adenosyl-L-methionine is bound by residues Val41, Gly65, Leu67, Ser71, Glu89, His94, Ala118, and Asp139. Residues Asp139, Asp165, and Asn166 each contribute to the Mg(2+) site.

Belongs to the class I-like SAM-binding methyltransferase superfamily. Cation-dependent O-methyltransferase family. In terms of assembly, homodimer. Mg(2+) is required as a cofactor.

The catalysed reaction is a catechol + S-adenosyl-L-methionine = a guaiacol + S-adenosyl-L-homocysteine + H(+). Its activity is regulated as follows. The metal ion affects the meta and para-regiospecificity of the enzyme as well as the enzyme activity and thermal stability. Its function is as follows. Catechol O-methyltransferase that can use various catechol-like compounds. Can produce vanillic acid (meta-form) and iso-vanillic acid (para-form) from protocatechuic acid (PCA). Does not have a regiospecificity, and produces the meta- and para-forms of the products in equal proportion. The protein is Catechol O-methyltransferase of Niastella koreensis (strain DSM 17620 / KACC 11465 / NBRC 106392 / GR20-10).